A 966-amino-acid polypeptide reads, in one-letter code: Phosphoenolpyruvate carboxylase (966 aa).

S10 carries the phosphoserine modification. Residues H171 and K601 contribute to the active site.

The protein belongs to the PEPCase type 1 family. In terms of assembly, homotetramer. The cofactor is Mg(2+).

Its subcellular location is the cytoplasm. The enzyme catalyses oxaloacetate + phosphate = phosphoenolpyruvate + hydrogencarbonate. By light-reversible phosphorylation. In terms of biological role, through the carboxylation of phosphoenolpyruvate (PEP) it forms oxaloacetate, a four-carbon dicarboxylic acid source for the tricarboxylic acid cycle. In Medicago sativa (Alfalfa), this protein is Phosphoenolpyruvate carboxylase (PEPC).